The following is a 704-amino-acid chain: MRFLSFWRLLLYHALCLALPEVSAHTVELNEMFGQIQSPGYPDSYPSDSEVTWNITVPEGFRIKLYFMHFNLESSYLCEYDYVKVETEDQVLATFCGRETTDTEQTPGQEVVLSPGTFMSVTFRSDFSNEERFTGFDAHYMAVDVDECKEREDEELSCDHYCHNYIGGYYCSCRFGYILHTDNRTCRVECSGNLFTQRTGTITSPDYPNPYPKSSECSYTIDLEEGFMVSLQFEDIFDIEDHPEVPCPYDYIKIKAGSKVWGPFCGEKSPEPISTQTHSVQILFRSDNSGENRGWRLSYRAAGNECPKLQPPVYGKIEPSQAVYSFKDQVLVSCDTGYKVLKDNEVMDTFQIECLKDGAWSNKIPTCKIVDCGAPAGLKHGLVTFSTRNNLTTYKSEIRYSCQQPYYKMLHNTTGVYTCSAHGTWTNEVLKRSLPTCLPVCGVPKFSRKQISRIFNGRPAQKGTMPWIAMLSHLNGQPFCGGSLLGSNWVLTAAHCLHQSLDPEEPTLHSSYLLSPSDFKIIMGKHWRRRSDEDEQHLHVKRTTLHPLYNPSTFENDLGLVELSESPRLNDFVMPVCLPEQPSTEGTMVIVSGWGKQFLQRFPENLMEIEIPIVNSDTCQEAYTPLKKKVTKDMICAGEKEGGKDACAGDSGGPMVTKDAERDQWYLVGVVSWGEDCGKKDRYGVYSYIYPNKDWIQRITGVRN.

An N-terminal signal peptide occupies residues 1–24 (MRFLSFWRLLLYHALCLALPEVSA). The CUB 1 domain occupies 25 to 143 (HTVELNEMFG…TGFDAHYMAV (119 aa)). Positions 25-189 (HTVELNEMFG…HTDNRTCRVE (165 aa)) are homodimerization. Residues 25–189 (HTVELNEMFG…HTDNRTCRVE (165 aa)) form an interaction with MBL2 region. The interval 25–283 (HTVELNEMFG…STQTHSVQIL (259 aa)) is interaction with FCN2. The interaction with MBL1 stretch occupies residues 25 to 305 (HTVELNEMFG…RLSYRAAGNE (281 aa)). Asparagine 54 carries N-linked (GlcNAc...) asparagine glycosylation. Residues glutamate 73, aspartate 81, aspartate 126, serine 128, aspartate 144, valine 145, and glutamate 147 each contribute to the Ca(2+) site. Cysteines 78 and 96 form a disulfide. An EGF-like; calcium-binding domain is found at 144-187 (DVDECKEREDEELSCDHYCHNYIGGYYCSCRFGYILHTDNRTCR). Cystine bridges form between cysteine 148-cysteine 162, cysteine 158-cysteine 171, cysteine 173-cysteine 186, and cysteine 190-cysteine 217. Ca(2+) is bound by residues asparagine 164, tyrosine 165, and glycine 168. A (3R)-3-hydroxyasparagine modification is found at asparagine 164. Asparagine 183 carries an N-linked (GlcNAc...) asparagine glycan. In terms of domain architecture, CUB 2 spans 190–302 (CSGNLFTQRT…RGWRLSYRAA (113 aa)). Ca(2+)-binding residues include glutamate 240, aspartate 250, aspartate 287, and serine 289. A disulfide bond links cysteine 247 and cysteine 265. Sushi domains are found at residues 304–369 (NECP…TCKI) and 370–439 (VDCG…TCLP). Intrachain disulfides connect cysteine 306-cysteine 354, cysteine 334-cysteine 367, cysteine 372-cysteine 419, cysteine 402-cysteine 437, cysteine 441-cysteine 577, cysteine 480-cysteine 496, cysteine 619-cysteine 636, and cysteine 647-cysteine 677. 2 N-linked (GlcNAc...) asparagine glycosylation sites follow: asparagine 390 and asparagine 412. A Peptidase S1 domain is found at 454-701 (IFNGRPAQKG…NKDWIQRITG (248 aa)). Active-site charge relay system residues include histidine 495 and aspartate 557. Serine 651 serves as the catalytic Charge relay system.

It belongs to the peptidase S1 family. In terms of assembly, homodimer. Interacts with the oligomeric lectins MBL2, FCN2 and FCN3; triggers the lectin pathway of complement through activation of C3. Interacts with SERPING1. Interacts with COLEC11; probably triggers the lectin pathway of complement. The iron and 2-oxoglutarate dependent 3-hydroxylation of aspartate and asparagine is (R) stereospecific within EGF domains. In terms of processing, N-glycosylated. Some N-linked glycan are of the complex-type. Post-translationally, autoproteolytic processing of the proenzyme produces the active enzyme composed on the heavy and the light chain held together by a disulfide bond. Isoform 1 but not isoform 2 is activated through autoproteolytic processing. Protein of the plasma which is primarily expressed by liver.

Its subcellular location is the secreted. With respect to regulation, inhibited by SERPING1 and A2M. Functions in the lectin pathway of complement, which performs a key role in innate immunity by recognizing pathogens through patterns of sugar moieties and neutralizing them. The lectin pathway is triggered upon binding of mannan-binding lectin (MBL) and ficolins to sugar moieties which leads to activation of the associated proteases MASP1 and MASP2. Functions as an endopeptidase and may activate MASP2 or C2 or directly activate C3 the key component of complement reaction. Isoform 2 may have an inhibitory effect on the activation of the lectin pathway of complement or may cleave IGFBP5. Also plays a role in development. The chain is Mannan-binding lectin serine protease 1 (Masp1) from Mus musculus (Mouse).